Reading from the N-terminus, the 145-residue chain is MKALLQRVGAARVEVGGEIVGSIDRGLLVLVGVEPEDGERCAAKMLHKLLNYRVFGDDEGKMNRSLLDVQGGLLLVSQFTLAANTRSGLRPSFSSAAPPAQGETVFEHLVKLAREAYPQVATGRFGADMQVHLVNDGPVTFLLES.

The short motif at 137 to 138 is the Gly-cisPro motif, important for rejection of L-amino acids element; the sequence is GP.

It belongs to the DTD family. As to quaternary structure, homodimer.

It localises to the cytoplasm. The enzyme catalyses glycyl-tRNA(Ala) + H2O = tRNA(Ala) + glycine + H(+). The catalysed reaction is a D-aminoacyl-tRNA + H2O = a tRNA + a D-alpha-amino acid + H(+). In terms of biological role, an aminoacyl-tRNA editing enzyme that deacylates mischarged D-aminoacyl-tRNAs. Also deacylates mischarged glycyl-tRNA(Ala), protecting cells against glycine mischarging by AlaRS. Acts via tRNA-based rather than protein-based catalysis; rejects L-amino acids rather than detecting D-amino acids in the active site. By recycling D-aminoacyl-tRNA to D-amino acids and free tRNA molecules, this enzyme counteracts the toxicity associated with the formation of D-aminoacyl-tRNA entities in vivo and helps enforce protein L-homochirality. This Pseudomonas aeruginosa (strain UCBPP-PA14) protein is D-aminoacyl-tRNA deacylase.